The following is a 345-amino-acid chain: Anthranilate phosphoribosyltransferase (345 aa).

5-phospho-alpha-D-ribose 1-diphosphate contacts are provided by residues Gly84, 87-88 (GD), Thr92, 94-97 (NIST), 112-120 (KHGGRSVSS), and Ser124. Position 84 (Gly84) interacts with anthranilate. Ser96 is a Mg(2+) binding site. Arg170 contacts anthranilate. Asp229 and Glu230 together coordinate Mg(2+).

This sequence belongs to the anthranilate phosphoribosyltransferase family. Homodimer. Mg(2+) serves as cofactor.

It carries out the reaction N-(5-phospho-beta-D-ribosyl)anthranilate + diphosphate = 5-phospho-alpha-D-ribose 1-diphosphate + anthranilate. It participates in amino-acid biosynthesis; L-tryptophan biosynthesis; L-tryptophan from chorismate: step 2/5. In terms of biological role, catalyzes the transfer of the phosphoribosyl group of 5-phosphorylribose-1-pyrophosphate (PRPP) to anthranilate to yield N-(5'-phosphoribosyl)-anthranilate (PRA). The protein is Anthranilate phosphoribosyltransferase of Herminiimonas arsenicoxydans.